The following is a 243-amino-acid chain: Transcription factor TCP6 (243 aa).

The segment at 1 to 55 is disordered; the sequence is MVMEPKKNQNLPSFLNPSRQNQDNDKKRKQTEVKGFDIVVGEKRKKKENEEEDQE. Positions 8 to 21 are enriched in polar residues; the sequence is NQNLPSFLNPSRQN. Residues 22 to 35 show a composition bias toward basic and acidic residues; sequence QDNDKKRKQTEVKG. Positions 42–66 form a coiled coil; sequence EKRKKKENEEEDQEIQILYEKEKKK. The region spanning 68–122 is the TCP domain; that stretch reads NKDRHLKVEGRGRRVRLPPLCAARIYQLTKELGHKSDGETLEWLLQHAEPSILSA.

Interacts with SPL.

The protein resides in the nucleus. In Arabidopsis thaliana (Mouse-ear cress), this protein is Transcription factor TCP6 (TCP6).